The chain runs to 828 residues: MKLSRRSFMKANAVAAAAAAAGLSVPGVARAVVGQQEAIKWDKAPCRFCGTGCGVLVGTQQGRVVACQGDPDAPVNRGLNCIKGYFLPKIMYGKDRLTQPLLRMKNGKYDKEGEFTLITWDQAFDVMEEKFKTALKEKGPESIGMFGSGQWTIWEGYAASKLFKAGFRSNNIDPNARHCMASAVVGFMRTFGMDEPMGCYDDIEQADAFVLWGANMAEMHPILWSRITNRRLSNQNVTVAVLSTYQHRSFELADNGIIFTPQSDLVILNYIANYIIQNNAINQDFFSKHVNLRKGATDIGYGLRPTHPLEKAAKNPGSDASEPMSFEDYKAFVAEYTLEKTAEMTGVPKDQLEQLAQLYADPNKKVISYWTMGFNQHTRGVWANNLVYNLHLLTGKISQPGCGPFSLTGQPSACGTAREVGTFAHRLPADMVVTNEKHRDICEKKWNIPSGTIPAKIGLHAVAQDRALKDGKLNVYWTMCTNNMQAGPNINEERMPGWRDPRNFIIVSDPYPTVSALAADLILPTAMWVEKEGAYGNAERRTQFWRQQVQAPGEAKSDLWQLVQFSRRFKTEEVWPEDLLAKKPELRGKTLYEVLYATPEVSKFPVSELAEDQLNDESRELGFYLQKGLFEEYAWFGRGHGHDLAPFDDYHKARGLRWPVVNGKETQWRYSEGNDPYVKAGEGYKFYGKPDGKAVIFALPFEPAAEAPDEEYDLWLSTGRVLEHWHTGSMTRRVPELHRAFPEAVLFIHPLDAKARDLRRGDKVKVVSRRGEVISIVETRGRNRPPQGLVYMPFFDAAQLVNKLTLDATDPLSKETDFKKCAVKLEKV.

The segment at residues 1–31 (MKLSRRSFMKANAVAAAAAAAGLSVPGVARA) is a signal peptide (tat-type signal). The 57-residue stretch at 39–95 (IKWDKAPCRFCGTGCGVLVGTQQGRVVACQGDPDAPVNRGLNCIKGYFLPKIMYGKD) folds into the 4Fe-4S Mo/W bis-MGD-type domain. [4Fe-4S] cluster is bound by residues C46, C49, C53, and C81. Residues K83, Q150, N175, C179, 212-219 (WGANMAEM), 243-247 (STYQH), 262-264 (QSD), M372, Q376, N482, 508-509 (SD), K531, D558, and 718-727 (TGRVLEHWHT) each bind Mo-bis(molybdopterin guanine dinucleotide). F794 contacts substrate. Residues N802 and K819 each coordinate Mo-bis(molybdopterin guanine dinucleotide).

The protein belongs to the prokaryotic molybdopterin-containing oxidoreductase family. NasA/NapA/NarB subfamily. As to quaternary structure, component of the periplasmic nitrate reductase NapAB complex composed of NapA and NapB. Requires [4Fe-4S] cluster as cofactor. It depends on Mo-bis(molybdopterin guanine dinucleotide) as a cofactor. Predicted to be exported by the Tat system. The position of the signal peptide cleavage has not been experimentally proven.

It is found in the periplasm. It catalyses the reaction 2 Fe(II)-[cytochrome] + nitrate + 2 H(+) = 2 Fe(III)-[cytochrome] + nitrite + H2O. Functionally, catalytic subunit of the periplasmic nitrate reductase complex NapAB. Receives electrons from NapB and catalyzes the reduction of nitrate to nitrite. This Shigella boydii serotype 18 (strain CDC 3083-94 / BS512) protein is Periplasmic nitrate reductase.